Here is a 486-residue protein sequence, read N- to C-terminus: MWKSVVGHDVSVSVETQGDDWDTDPDFVNDISEKEQRWGAKTIEGSGRTEHINIHQLRNKVSEEHDVLRKKEMESGPKASHGYGGRFGVERDRMDKSAVGHEYVAEVEKHSSQTDAAKGFGGKYGVERDRADKSAVGFDYKGEVEKHTSQKDYSRGFGGRYGVEKDKWDKAALGYDYKGETEKHESQRDYAKGFGGQYGIQKDRVDKSAVGFNEMEAPTTAYKKTTPIEAASSGTRGLKAKFESMAEEKRKREEEEKAQQVARRQQERKAVTKRSPEAPQPVIAMEEPAVPAPLPKKISSEAWPPVGTPPSSESEPVRTSREHPVPLLPIRQTLPEDNEEPPALPPRTLEGLQVEEEPVYEAEPEPEPEPEPEPENDYEDVEEMDRHEQEDEPEGDYEEVLEPEDSSFSSALAGSSGCPAGAGAGAVALGISAVAVYDYQGEGSDELSFDPDDVITDIEMVDEGWWRGRCHGHFGLFPANYVKLLE.

The interval 27–66 (FVNDISEKEQRWGAKTIEGSGRTEHINIHQLRNKVSEEHD) is involved in HAX-1 binding. The residue at position 41 (lysine 41) is an N6-acetyllysine. 3 Cortactin repeats span residues 79 to 115 (ASHG…SQTD), 116 to 152 (AAKG…SQKD), and 153 to 189 (YSRG…SQRD). Lysine 123 bears the N6-acetyllysine mark. Tyrosine 140 is modified (phosphotyrosine). The Cortactin 4; truncated repeat unit spans residues 190 to 212 (YAKGFGGQYGIQKDRVDKSAVGF). The residue at position 192 (lysine 192) is an N6-acetyllysine. Residue tyrosine 198 is modified to Phosphotyrosine. At tyrosine 222 the chain carries Phosphotyrosine; by FGR. Position 241 is an N6-acetyllysine (lysine 241). Basic and acidic residues predominate over residues 243-276 (ESMAEEKRKREEEEKAQQVARRQQERKAVTKRSP). The disordered stretch occupies residues 243–419 (ESMAEEKRKR…SALAGSSGCP (177 aa)). Serine 275 is subject to Phosphoserine. Threonine 308 carries the post-translational modification Phosphothreonine. Residues 315 to 324 (EPVRTSREHP) are compositionally biased toward basic and acidic residues. Acidic residues-rich tracts occupy residues 353-383 (QVEE…DVEE) and 390-405 (EDEP…EPED). Phosphotyrosine; by SYK and FES occurs at positions 378 and 397. Residues 406-419 (SSFSSALAGSSGCP) show a composition bias toward low complexity. The SH3 domain maps to 428 to 486 (ALGISAVAVYDYQGEGSDELSFDPDDVITDIEMVDEGWWRGRCHGHFGLFPANYVKLLE).

Associates with the SH2 and SH3 domains of LCK. Binding to he LCK SH3 domain occurs constitutively, while binding to the LCK SH2 domain occurs only upon TCR stimulation. A similar binding pattern was observed with LYN, but not with FYN in which the FYN SH2 region associates upon TCR stimulation but the FYN SH3 region does not associate regardless of TCR stimulation. Directly associates with HAX1, through binding to its C-terminal region. Interacts with HS1BP3. Interacts with FES/FPS. Interacts (via SH2 domain) with FGR. Forms a multiprotein complex with LYN and ANKRD54. In terms of processing, phosphorylated by FES. Phosphorylated by LYN, FYN and FGR after cross-linking of surface IgM on B-cells. Phosphorylation by LYN, FYN and FGR requires prior phosphorylation by SYK or FES. Expressed only in tissues and cells of hematopoietic origin.

It localises to the membrane. Its subcellular location is the cytoplasm. The protein localises to the mitochondrion. Functionally, substrate of the antigen receptor-coupled tyrosine kinase. Plays a role in antigen receptor signaling for both clonal expansion and deletion in lymphoid cells. May also be involved in the regulation of gene expression. This Homo sapiens (Human) protein is Hematopoietic lineage cell-specific protein (HCLS1).